The following is a 205-amino-acid chain: Snake venom metalloproteinase BmooMPalpha-I (205 aa).

The 197-residue stretch at Arg-8–Pro-204 folds into the Peptidase M12B domain. Ca(2+)-binding residues include Glu-11 and Asp-95. 3 disulfides stabilise this stretch: Cys-119/Cys-199, Cys-159/Cys-183, and Cys-161/Cys-166. His-144 provides a ligand contact to Zn(2+). Glu-145 is a catalytic residue. 2 residues coordinate Zn(2+): His-148 and His-154. 2 residues coordinate Ca(2+): Cys-199 and Asn-202.

Belongs to the venom metalloproteinase (M12B) family. P-I subfamily. Monomer. Zn(2+) is required as a cofactor. In terms of tissue distribution, expressed by the venom gland.

It localises to the secreted. Its activity is regulated as follows. Inhibited by EDTA. Not inhibited by the serine proteinase inhibitors aprotinin and benzamidine. Its function is as follows. Snake venom zinc metalloproteinase that cleaves the alpha chain of fibrinogen (FGA) first followed by the beta chain (FGB) and shows no effect on the gamma chain. Cleaves only the beta chain of fibrin, leaving the gamma-dimer untouched. Shows proteolytic activity towards azocasein. Causes defibrinogenation when intraperitoneally administered on mice. This is Snake venom metalloproteinase BmooMPalpha-I from Bothrops moojeni (Lance-headed viper).